The chain runs to 344 residues: Heat-inducible transcription repressor HrcA (344 aa).

The protein belongs to the HrcA family.

Its function is as follows. Negative regulator of class I heat shock genes (grpE-dnaK-dnaJ and groELS operons). Prevents heat-shock induction of these operons. This is Heat-inducible transcription repressor HrcA from Geobacillus stearothermophilus (Bacillus stearothermophilus).